The primary structure comprises 311 residues: Aspartate carbamoyltransferase catalytic subunit (311 aa).

Positions 55 and 56 each coordinate carbamoyl phosphate. Lys-85 is a binding site for L-aspartate. Residues Arg-106, His-135, and Gln-138 each contribute to the carbamoyl phosphate site. 2 residues coordinate L-aspartate: Arg-168 and Arg-230. Residues Leu-268 and Pro-269 each contribute to the carbamoyl phosphate site.

This sequence belongs to the aspartate/ornithine carbamoyltransferase superfamily. ATCase family. As to quaternary structure, heterododecamer (2C3:3R2) of six catalytic PyrB chains organized as two trimers (C3), and six regulatory PyrI chains organized as three dimers (R2).

The enzyme catalyses carbamoyl phosphate + L-aspartate = N-carbamoyl-L-aspartate + phosphate + H(+). The protein operates within pyrimidine metabolism; UMP biosynthesis via de novo pathway; (S)-dihydroorotate from bicarbonate: step 2/3. Catalyzes the condensation of carbamoyl phosphate and aspartate to form carbamoyl aspartate and inorganic phosphate, the committed step in the de novo pyrimidine nucleotide biosynthesis pathway. This chain is Aspartate carbamoyltransferase catalytic subunit, found in Yersinia enterocolitica serotype O:8 / biotype 1B (strain NCTC 13174 / 8081).